A 114-amino-acid chain; its full sequence is Histone H2A.Z-specific chaperone chz-1 (114 aa).

Residues 1–22 (MSTENGTTDTTLAGTAEANTPF) show a composition bias toward polar residues. Residues 1–114 (MSTENGTTDT…FVPEDEEMEE (114 aa)) are disordered. Basic and acidic residues predominate over residues 24-40 (SKGKGKAAAESEDHPMG). Acidic residues-rich tracts occupy residues 41 to 68 (EAED…EEID) and 93 to 114 (PAEE…EMEE).

This sequence belongs to the CHZ1 family. In terms of assembly, forms a heterotrimer with H2A.Z-H2B, stabilizing the association of the histone dimer. Also, with a lower affinity, forms a heterotrimer with H2A-H2B.

The protein localises to the nucleus. Its function is as follows. Forms a chaperone-bound H2A.Z-H2B complex that acts as a source for SWR1 complex-dependent H2A to H2A.Z histone replacement in chromatin. The protein is Histone H2A.Z-specific chaperone chz-1 (chz-1) of Neurospora crassa (strain ATCC 24698 / 74-OR23-1A / CBS 708.71 / DSM 1257 / FGSC 987).